The chain runs to 98 residues: NADH-ubiquinone oxidoreductase chain 4L (98 aa).

Transmembrane regions (helical) follow at residues 1 to 21, 29 to 49, and 61 to 81; these read MPYI…GTLM, SLLC…LLSL, and LILL…LIMI.

The protein belongs to the complex I subunit 4L family. Core subunit of respiratory chain NADH dehydrogenase (Complex I) which is composed of 45 different subunits.

The protein localises to the mitochondrion inner membrane. It catalyses the reaction a ubiquinone + NADH + 5 H(+)(in) = a ubiquinol + NAD(+) + 4 H(+)(out). Core subunit of the mitochondrial membrane respiratory chain NADH dehydrogenase (Complex I) which catalyzes electron transfer from NADH through the respiratory chain, using ubiquinone as an electron acceptor. Part of the enzyme membrane arm which is embedded in the lipid bilayer and involved in proton translocation. This chain is NADH-ubiquinone oxidoreductase chain 4L (MT-ND4L), found in Mammuthus primigenius (Siberian woolly mammoth).